Consider the following 511-residue polypeptide: UDP-N-acetylmuramoyl-L-alanyl-D-glutamate--2,6-diaminopimelate ligase (511 aa).

S33 serves as a coordination point for UDP-N-acetyl-alpha-D-muramoyl-L-alanyl-D-glutamate. Residue 118–124 (GTNGKTT) coordinates ATP. UDP-N-acetyl-alpha-D-muramoyl-L-alanyl-D-glutamate-binding positions include 160–161 (TT), S187, Q193, and R195. K227 is modified (N6-carboxylysine). Meso-2,6-diaminopimelate is bound by residues R403, 427-430 (DNPR), G478, and E482. Positions 427–430 (DNPR) match the Meso-diaminopimelate recognition motif motif.

It belongs to the MurCDEF family. MurE subfamily. It depends on Mg(2+) as a cofactor. Carboxylation is probably crucial for Mg(2+) binding and, consequently, for the gamma-phosphate positioning of ATP.

Its subcellular location is the cytoplasm. It carries out the reaction UDP-N-acetyl-alpha-D-muramoyl-L-alanyl-D-glutamate + meso-2,6-diaminopimelate + ATP = UDP-N-acetyl-alpha-D-muramoyl-L-alanyl-gamma-D-glutamyl-meso-2,6-diaminopimelate + ADP + phosphate + H(+). It functions in the pathway cell wall biogenesis; peptidoglycan biosynthesis. In terms of biological role, catalyzes the addition of meso-diaminopimelic acid to the nucleotide precursor UDP-N-acetylmuramoyl-L-alanyl-D-glutamate (UMAG) in the biosynthesis of bacterial cell-wall peptidoglycan. In Prochlorococcus marinus subsp. pastoris (strain CCMP1986 / NIES-2087 / MED4), this protein is UDP-N-acetylmuramoyl-L-alanyl-D-glutamate--2,6-diaminopimelate ligase.